Reading from the N-terminus, the 586-residue chain is Retron Ec67 protein (586 aa).

Residues 29-262 (FLTNVLYRIG…SRQEVTGLTV (234 aa)) form the Reverse transcriptase domain. Mg(2+)-binding residues include Asp120, Asp201, and Asp202.

The protein belongs to the bacterial reverse transcriptase family.

The catalysed reaction is DNA(n) + a 2'-deoxyribonucleoside 5'-triphosphate = DNA(n+1) + diphosphate. The enzyme catalyses Endonucleolytic cleavage to 5'-phosphomonoester.. Functionally, reverse transcriptase (RT) component of antiviral defense system retron Ec67, minimally composed of a non-coding RNA (ncRNA) and this RT. Expression of these 2 elements confers protection against bacteriophage T5. At multiplicity of infection (MOI) of 0.02 cultures grow normally when infected with T5 without collapsing, at MOI 2 cultures enter growth stasis. Responsible for synthesis of msDNA-Ec67 (a branched molecule with RNA linked by a 2',5'-phosphodiester bond to ssDNA). The retron transcript serves as primer (from a conserved internal G residue) and template for the reaction, and codes for the RT. Can use other retrons as substrate (msDNA-Mx162 and msDNA-Ec86). Also able to synthesize DNA from a DNA template at least in vitro, although the enzyme is less active with a DNA template. The polypeptide is Retron Ec67 protein (Escherichia coli).